A 247-amino-acid chain; its full sequence is Trypsin-2 (247 aa).

The first 15 residues, 1 to 15 (MNLLLILTFVAAAVA), serve as a signal peptide directing secretion. The propeptide at 16–23 (APFDDDDK) is activation peptide. One can recognise a Peptidase S1 domain in the interval 24-244 (IVGGYICEEN…YVDWIKDTIA (221 aa)). Cystine bridges form between C30-C160, C48-C64, C171-C185, and C196-C220. Catalysis depends on H63, which acts as the Charge relay system. 4 residues coordinate Ca(2+): E75, N77, V80, and E85. D107 functions as the Charge relay system in the catalytic mechanism. Residue Y154 is modified to Sulfotyrosine. S200 functions as the Charge relay system in the catalytic mechanism.

The protein belongs to the peptidase S1 family. The cofactor is Ca(2+). Post-translationally, sulfated on tyrosine. In terms of processing, sulfation at Tyr-154 increases selectivity towards basic versus apolar residues at the P2' position of inhibitors that bind in a substrate-like fashion. Although the increase in selectivity is relatively small, it may facilitate digestion of a broader range of dietary proteins. In terms of tissue distribution, expressed in Paneth cells, at the base of small intestinal crypts.

Its subcellular location is the secreted. It is found in the extracellular space. It catalyses the reaction Preferential cleavage: Arg-|-Xaa, Lys-|-Xaa.. In terms of biological role, in the ileum, may be involved in defensin processing, including DEFA5. This Homo sapiens (Human) protein is Trypsin-2 (PRSS2).